Here is a 56-residue protein sequence, read N- to C-terminus: Large ribosomal subunit protein bL32 (56 aa).

The segment at 1–37 (MAVQQNKKSRSRRDMRRSHDALTTAAVSVDKTTGETH) is disordered. Over residues 7–16 (KKSRSRRDMR) the composition is skewed to basic residues.

It belongs to the bacterial ribosomal protein bL32 family.

This Haemophilus ducreyi (strain 35000HP / ATCC 700724) protein is Large ribosomal subunit protein bL32.